We begin with the raw amino-acid sequence, 541 residues long: Chaperonin GroEL (541 aa).

Residues 30-33 (TLGP), Lys51, 87-91 (DGTTT), Gly415, and Asp495 each bind ATP.

The protein belongs to the chaperonin (HSP60) family. As to quaternary structure, forms a cylinder of 14 subunits composed of two heptameric rings stacked back-to-back. Interacts with the co-chaperonin GroES.

Its subcellular location is the cytoplasm. The enzyme catalyses ATP + H2O + a folded polypeptide = ADP + phosphate + an unfolded polypeptide.. Its function is as follows. Together with its co-chaperonin GroES, plays an essential role in assisting protein folding. The GroEL-GroES system forms a nano-cage that allows encapsulation of the non-native substrate proteins and provides a physical environment optimized to promote and accelerate protein folding. This chain is Chaperonin GroEL, found in Pantoea ananas (Erwinia uredovora).